A 509-amino-acid polypeptide reads, in one-letter code: Membrane-bound lytic murein transglycosylase F (509 aa).

Residues 1-40 (MLASACTHSWRTGRFLNRIIKSSVQTLTAAALIANLSACS) form the signal peptide. The interval 41–280 (RPTTLEKIEQ…YLQERYFGHV (240 aa)) is non-LT domain. The interval 281 to 509 (NQLNYVGART…APFRVTPPML (229 aa)) is LT domain. The active site involves glutamate 327. A disordered region spans residues 474 to 500 (DGSVAQNEDAPTTGADGTTEETPAIPA).

The protein in the N-terminal section; belongs to the bacterial solute-binding protein 3 family. In the C-terminal section; belongs to the transglycosylase Slt family.

Its subcellular location is the cell outer membrane. It carries out the reaction Exolytic cleavage of the (1-&gt;4)-beta-glycosidic linkage between N-acetylmuramic acid (MurNAc) and N-acetylglucosamine (GlcNAc) residues in peptidoglycan, from either the reducing or the non-reducing ends of the peptidoglycan chains, with concomitant formation of a 1,6-anhydrobond in the MurNAc residue.. Its function is as follows. Murein-degrading enzyme that degrades murein glycan strands and insoluble, high-molecular weight murein sacculi, with the concomitant formation of a 1,6-anhydromuramoyl product. Lytic transglycosylases (LTs) play an integral role in the metabolism of the peptidoglycan (PG) sacculus. Their lytic action creates space within the PG sacculus to allow for its expansion as well as for the insertion of various structures such as secretion systems and flagella. In Hahella chejuensis (strain KCTC 2396), this protein is Membrane-bound lytic murein transglycosylase F.